A 189-amino-acid chain; its full sequence is MKIGVLGIQGDVYEHYTAIRPLKNKYKVEAYIIRSPEEINEMDGIIIPGGESTTITRFLSRYINIINENVRNGMKIMGTCAGAIILSKDTGDPRVHGTGIMDIKIQRNAYGRQIDSFIDAVNIKNIGTFNAVFIRAPVIDDPGKTSVLGEYNGKPVIVENENAIAMTFHPELTGDLRVHEYFLRKVMGN.

50–52 (GES) lines the L-glutamine pocket. Residue Cys-80 is the Nucleophile of the active site. L-glutamine contacts are provided by residues Arg-107 and 134–135 (IR). Active-site charge relay system residues include His-169 and Glu-171.

Belongs to the glutaminase PdxT/SNO family. In terms of assembly, in the presence of PdxS, forms a dodecamer of heterodimers. Only shows activity in the heterodimer.

The catalysed reaction is aldehydo-D-ribose 5-phosphate + D-glyceraldehyde 3-phosphate + L-glutamine = pyridoxal 5'-phosphate + L-glutamate + phosphate + 3 H2O + H(+). It carries out the reaction L-glutamine + H2O = L-glutamate + NH4(+). It participates in cofactor biosynthesis; pyridoxal 5'-phosphate biosynthesis. Catalyzes the hydrolysis of glutamine to glutamate and ammonia as part of the biosynthesis of pyridoxal 5'-phosphate. The resulting ammonia molecule is channeled to the active site of PdxS. This Picrophilus torridus (strain ATCC 700027 / DSM 9790 / JCM 10055 / NBRC 100828 / KAW 2/3) protein is Pyridoxal 5'-phosphate synthase subunit PdxT.